A 113-amino-acid polypeptide reads, in one-letter code: Endoribonuclease SymE (113 aa).

One can recognise a SpoVT-AbrB domain in the interval 29 to 74; the sequence is SRYPDYSRIPAITLKGQWLEAAGFATGTAIDVKVMEGCIVLTAQPP.

This sequence belongs to the SymE family.

It is found in the cytoplasm. Its function is as follows. Involved in the degradation and recycling of damaged RNA. It is itself a target for degradation by the ATP-dependent protease Lon. The sequence is that of Endoribonuclease SymE from Escherichia coli O1:K1 / APEC.